A 904-amino-acid chain; its full sequence is Phosphatidate phosphatase PAH1 (904 aa).

The segment at 1–112 (MSLVGRVGSL…SGSENNNGNQ (112 aa)) is N-LIP. Disordered stretches follow at residues 254–293 (EESSDTANIASDKVDAINDERNDLDSHSRDNAEKDSHDAE), 305–326 (ELTKTSENVKSEEPGPTFEDRN), 440–470 (GIIESEDQDSERVSIDSTREEVDKDNEDRKT), 574–595 (VEENESPKPKDDETTITPSSSG), and 612–655 (EHTG…QLVR). Basic and acidic residues-rich tracts occupy residues 265-293 (DKVDAINDERNDLDSHSRDNAEKDSHDAE), 311-326 (ENVKSEEPGPTFEDRN), and 449-470 (SERVSIDSTREEVDKDNEDRKT). Residues 631 to 642 (GLQNSPETQSTT) are compositionally biased toward polar residues. The segment at 703–857 (IVISDVDGTI…FIINPKGEVA (155 aa)) is C-LIP. Residues 707–711 (DVDGT) carry the DXDXT motif motif.

The protein belongs to the lipin family. Requires Mg(2+) as cofactor. Expressed in roots, leaves, stems, flowers, siliques, embryos and mature seeds.

It is found in the cytoplasm. Its subcellular location is the cytosol. The enzyme catalyses a 1,2-diacyl-sn-glycero-3-phosphate + H2O = a 1,2-diacyl-sn-glycerol + phosphate. Magnesium-dependent phosphatidate phosphatase which catalyzes the dephosphorylation of phosphatidate to yield diacylglycerol. Acts redundantly with PAH2 to repress phospholipid biosynthesis at the endoplasmic reticulum (ER). May function indirectly as repressor of multiple enzymes involved in phospholipid biosynthesis. Is involved in the pathway of galactolipid synthesis in the ER, which is required for the membrane lipid remodeling, an essential adaptation mechanism to cope with phosphate starvation. The sequence is that of Phosphatidate phosphatase PAH1 (PAH1) from Arabidopsis thaliana (Mouse-ear cress).